We begin with the raw amino-acid sequence, 86 residues long: Putative antitoxin VapB5 (86 aa).

This sequence belongs to the phD/YefM antitoxin family. Forms a complex with VapC5.

In terms of biological role, probable antitoxin component of a probable type II toxin-antitoxin (TA) system. The cognate toxin is VapC5. This is Putative antitoxin VapB5 (vapB5) from Mycobacterium tuberculosis (strain CDC 1551 / Oshkosh).